A 1083-amino-acid chain; its full sequence is Voltage-gated inwardly rectifying potassium channel KCNH3 (1083 aa).

The Cytoplasmic segment spans residues Met-1–Asp-228. The PAS domain occupies Ile-18 to His-90. Positions Phe-93–Trp-145 constitute a PAC domain. A compositionally biased stretch (basic and acidic residues) spans Lys-137 to Gly-150. The interval Lys-137–Arg-157 is disordered. The chain crosses the membrane as a helical span at residues Gly-229–Ser-249. At Thr-250–Gly-259 the chain is on the extracellular side. A helical transmembrane segment spans residues Pro-260 to Phe-280. Topologically, residues Arg-281–Tyr-302 are cytoplasmic. Residues Val-303 to Phe-323 traverse the membrane as a helical segment. The Extracellular segment spans residues Lys-324 to Ala-331. Residues His-332–Tyr-352 form a helical; Voltage-sensor membrane-spanning segment. Over Ser-353–Thr-361 the chain is Cytoplasmic. Residues Leu-362–Gly-382 form a helical membrane-spanning segment. The Extracellular segment spans residues Gln-383–Ile-453. N-linked (GlcNAc...) asparagine glycosylation is found at Asn-421, Asn-428, and Asn-436. An intramembrane region (pore-forming) is located at residues Thr-454–Asn-474. Residues Ser-465–Asn-470 carry the Selectivity filter motif. Topologically, residues Thr-475–Lys-479 are extracellular. The chain crosses the membrane as a helical span at residues Ile-480–Val-500. Over Thr-501–Val-1083 the chain is Cytoplasmic. Residue Leu-582–Arg-697 coordinates a nucleoside 3',5'-cyclic phosphate. 3 disordered regions span residues Glu-729–Pro-810, Cys-832–Arg-873, and Met-972–Trp-1055. A compositionally biased stretch (basic residues) spans Thr-773–Pro-785. Low complexity predominate over residues Gly-844 to Gly-861.

This sequence belongs to the potassium channel family. H (Eag) (TC 1.A.1.20) subfamily. Kv12.2/KCNH3 sub-subfamily. As to quaternary structure, the potassium channel is probably composed of a homo- or heterotetrameric complex of pore-forming alpha subunits that can associate with modulating beta subunits. Interacts with KCNE1 and KCNE3; these interactions regulate KCNH3 trafficking to the plasma membrane and its subsequent voltage-gated potassium channel activity. In terms of processing, N-glycosylated. N-glycosylation mediates traffick to the cell membrane but is not necessary for voltage-gated potassium channel activity. Detected only in brain, in particular in the telencephalon. Detected in the cerebral cortex, occipital pole, frontal and temporal lobe, putamen, amygdala, hippocampus and caudate nucleus.

The protein localises to the cell membrane. The catalysed reaction is K(+)(in) = K(+)(out). Its function is as follows. Pore-forming (alpha) subunit of a voltage-gated inwardly rectifying potassium channel. Charactherized by a fast rate of activation during depolarization followed by a rapid inactivation at much more depolarized value causing inward rectification due to a C-type inactivation mechanism. Exhibits a rapid recovery from inactivation. The sequence is that of Voltage-gated inwardly rectifying potassium channel KCNH3 from Homo sapiens (Human).